Consider the following 296-residue polypeptide: Myozenin-1 (296 aa).

Residue Ser-82 is modified to Phosphoserine. 2 stretches are compositionally biased toward gly residues: residues 105 to 117 (FSYGKGSSGGQAG) and 134 to 170 (SGFGAGGSGGPGGQAGGGGAPGTVGLGEPGSGDQAGG). Residues 105–172 (FSYGKGSSGG…GSGDQAGGDG (68 aa)) are disordered.

This sequence belongs to the myozenin family. As to quaternary structure, interacts with ACTN2, ACTN3, FLNA, FLNB, FLNC, LDB3, PPP3CA and TCAP. Interacts via its C-terminal region with MYOT. As to expression, expressed primarily in skeletal muscle and specifically enriched in the gastrocnemius, which is composed predominantly of fast-twitch muscle fibers. Detected at lower levels in heart.

It localises to the nucleus. Its subcellular location is the cell projection. The protein localises to the pseudopodium. Myozenins may serve as intracellular binding proteins involved in linking Z-disk proteins such as alpha-actinin, gamma-filamin, TCAP/telethonin, LDB3/ZASP and localizing calcineurin signaling to the sarcomere. Plays an important role in the modulation of calcineurin signaling. May play a role in myofibrillogenesis. The chain is Myozenin-1 from Mus musculus (Mouse).